A 295-amino-acid polypeptide reads, in one-letter code: Pyridoxal 5'-phosphate synthase subunit PdxS (295 aa).

Residue Asp-25 participates in D-ribose 5-phosphate binding. Lys-82 functions as the Schiff-base intermediate with D-ribose 5-phosphate in the catalytic mechanism. Gly-154 is a D-ribose 5-phosphate binding site. Arg-166 lines the D-glyceraldehyde 3-phosphate pocket. Residues Gly-215 and 236–237 (GS) each bind D-ribose 5-phosphate.

This sequence belongs to the PdxS/SNZ family. As to quaternary structure, in the presence of PdxT, forms a dodecamer of heterodimers.

The enzyme catalyses aldehydo-D-ribose 5-phosphate + D-glyceraldehyde 3-phosphate + L-glutamine = pyridoxal 5'-phosphate + L-glutamate + phosphate + 3 H2O + H(+). It functions in the pathway cofactor biosynthesis; pyridoxal 5'-phosphate biosynthesis. Its function is as follows. Catalyzes the formation of pyridoxal 5'-phosphate from ribose 5-phosphate (RBP), glyceraldehyde 3-phosphate (G3P) and ammonia. The ammonia is provided by the PdxT subunit. Can also use ribulose 5-phosphate and dihydroxyacetone phosphate as substrates, resulting from enzyme-catalyzed isomerization of RBP and G3P, respectively. This Listeria welshimeri serovar 6b (strain ATCC 35897 / DSM 20650 / CCUG 15529 / CIP 8149 / NCTC 11857 / SLCC 5334 / V8) protein is Pyridoxal 5'-phosphate synthase subunit PdxS.